Here is a 534-residue protein sequence, read N- to C-terminus: 26S proteasome non-ATPase regulatory subunit 3 (534 aa).

Over residues methionine 1–lysine 16 the composition is skewed to basic and acidic residues. Positions methionine 1–threonine 69 are disordered. Pro residues predominate over residues proline 17–proline 32. Lysine 38 participates in a covalent cross-link: Glycyl lysine isopeptide (Lys-Gly) (interchain with G-Cter in SUMO1); alternate. Lysine 38 is covalently cross-linked (Glycyl lysine isopeptide (Lys-Gly) (interchain with G-Cter in SUMO2); alternate). The PCI domain maps to alanine 286–aspartate 465. Phosphoserine is present on residues serine 418 and serine 430. Residues serine 500–proline 534 are disordered. Basic and acidic residues predominate over residues tyrosine 501–methionine 525.

Belongs to the proteasome subunit S3 family. In terms of assembly, component of the 19S proteasome regulatory particle complex. The 26S proteasome consists of a 20S core particle (CP) and two 19S regulatory subunits (RP). The regulatory particle is made of a lid composed of 9 subunits including PSMD3, a base containing 6 ATPases and few additional components. Interacts with UBQLN1 (via ubiquitin-like domain). Interacts with ERCC6.

Its function is as follows. Component of the 26S proteasome, a multiprotein complex involved in the ATP-dependent degradation of ubiquitinated proteins. This complex plays a key role in the maintenance of protein homeostasis by removing misfolded or damaged proteins, which could impair cellular functions, and by removing proteins whose functions are no longer required. Therefore, the proteasome participates in numerous cellular processes, including cell cycle progression, apoptosis, or DNA damage repair. This Homo sapiens (Human) protein is 26S proteasome non-ATPase regulatory subunit 3 (PSMD3).